The sequence spans 301 residues: Glycine--tRNA ligase alpha subunit (301 aa).

The protein belongs to the class-II aminoacyl-tRNA synthetase family. Tetramer of two alpha and two beta subunits.

The protein resides in the cytoplasm. The catalysed reaction is tRNA(Gly) + glycine + ATP = glycyl-tRNA(Gly) + AMP + diphosphate. The chain is Glycine--tRNA ligase alpha subunit from Campylobacter hominis (strain ATCC BAA-381 / DSM 21671 / CCUG 45161 / LMG 19568 / NCTC 13146 / CH001A).